We begin with the raw amino-acid sequence, 157 residues long: MYWRRAALVGTRLIPVRSSSAGRLEGPAGISGSGMGNSTSSSLGNAATAPVNQIQETISNNCVVIFSKTSCSYCTMAKNLFHDMNVNYKVVELDMLEYGSQFQDALHKMTGERTVPRIFVNGTFIGGATDTHRLHKEGKLLPLVHQCHLKNSKREEL.

Residues 1-18 (MYWRRAALVGTRLIPVRS) constitute a mitochondrion transit peptide. Phosphoserine is present on Ser20. The 101-residue stretch at 51-151 (VNQIQETISN…PLVHQCHLKN (101 aa)) folds into the Glutaredoxin domain. Cys62 provides a ligand contact to [2Fe-2S] cluster. Lys68 is a glutathione binding site. Cys71 is modified (S-glutathionyl cysteine; alternate). Cys71 and Cys74 are oxidised to a cystine. The glutathione site is built by Gln103 and Val115. Cys147 contacts [2Fe-2S] cluster.

Belongs to the glutaredoxin family. Monomer; active form. Homodimer; inactive form. The homodimer is probably linked by 1 2Fe-2S cluster.

It is found in the mitochondrion. With respect to regulation, the 2Fe-2S present in the homodimer leads to inactivation of the enzyme. The 2Fe-2S may serve as a redox sensor: the presence of one-electron oxidants or reductants leading to the loss of the 2Fe-2S cluster, subsequent monomerization and activation of the enzyme. Functionally, glutathione-dependent oxidoreductase that facilitates the maintenance of mitochondrial redox homeostasis upon induction of apoptosis by oxidative stress. Involved in response to hydrogen peroxide and regulation of apoptosis caused by oxidative stress. Acts as a very efficient catalyst of monothiol reactions because of its high affinity for protein glutathione-mixed disulfides. Can receive electrons not only from glutathione (GSH), but also from thioredoxin reductase supporting both monothiol and dithiol reactions. Efficiently catalyzes both glutathionylation and deglutathionylation of mitochondrial complex I, which in turn regulates the superoxide production by the complex. Overexpression decreases the susceptibility to apoptosis and prevents loss of cardiolipin and cytochrome c release. The protein is Glutaredoxin-2, mitochondrial (GLRX2) of Bos taurus (Bovine).